A 229-amino-acid polypeptide reads, in one-letter code: MVHPYLFLNFFRELLHPLGFSEAGADAVVYTWLIMIGLVVLSIAATKRLQAVPSGLQNFMEVIVGGIENMLVETMGEHGKPFFPLVATLALFILVSNLIGLIPGFFPPTANINTTAACAVVVFVTTHIVGVKHHGAGYIKHFLGPIAWLAPMMFFIEVIGHLSRVISLTLRLFGNMNGHELVLIIFFGLAPFVVPLPMMLMGVLVSFIQAFVFMLLAMIYIQGSLEHAH.

A run of 6 helical transmembrane segments spans residues 25–45 (ADAV…SIAA), 82–102 (FFPL…IGLI), 104–124 (GFFP…VVFV), 142–162 (FLGP…IGHL), 181–201 (LVLI…MMLM), and 202–222 (GVLV…IYIQ).

This sequence belongs to the ATPase A chain family. In terms of assembly, F-type ATPases have 2 components, CF(1) - the catalytic core - and CF(0) - the membrane proton channel. CF(1) has five subunits: alpha(3), beta(3), gamma(1), delta(1), epsilon(1). CF(0) has three main subunits: a(1), b(2) and c(9-12). The alpha and beta chains form an alternating ring which encloses part of the gamma chain. CF(1) is attached to CF(0) by a central stalk formed by the gamma and epsilon chains, while a peripheral stalk is formed by the delta and b chains.

Its subcellular location is the cell inner membrane. In terms of biological role, key component of the proton channel; it plays a direct role in the translocation of protons across the membrane. This is ATP synthase subunit a from Geobacter sp. (strain M21).